A 427-amino-acid polypeptide reads, in one-letter code: Adenylosuccinate synthetase (427 aa).

GTP contacts are provided by residues 13–19 (GDEGKGK) and 41–43 (GHT). The active-site Proton acceptor is the Asp14. Mg(2+) contacts are provided by Asp14 and Gly41. Residues 14–17 (DEGK), 39–42 (NAGH), Thr129, Arg143, Gln224, Thr239, and Arg303 each bind IMP. His42 acts as the Proton donor in catalysis. The interval 117 to 137 (QEKQRGEESLGTTKRGIGPAY) is disordered. 299-305 (TTTGRPR) is a substrate binding site. GTP is bound by residues Arg305, 331 to 333 (KLD), and 414 to 416 (GTG).

This sequence belongs to the adenylosuccinate synthetase family. Homodimer. Requires Mg(2+) as cofactor.

Its subcellular location is the cytoplasm. The enzyme catalyses IMP + L-aspartate + GTP = N(6)-(1,2-dicarboxyethyl)-AMP + GDP + phosphate + 2 H(+). Its pathway is purine metabolism; AMP biosynthesis via de novo pathway; AMP from IMP: step 1/2. Its function is as follows. Plays an important role in the de novo pathway of purine nucleotide biosynthesis. Catalyzes the first committed step in the biosynthesis of AMP from IMP. In Caldicellulosiruptor saccharolyticus (strain ATCC 43494 / DSM 8903 / Tp8T 6331), this protein is Adenylosuccinate synthetase.